The sequence spans 493 residues: 3-octaprenyl-4-hydroxybenzoate carboxy-lyase (493 aa).

Asn-175 contacts Mn(2+). Residues 178–180 (IYR), 192–194 (RWL), and 197–198 (RG) contribute to the prenylated FMN site. Glu-241 contributes to the Mn(2+) binding site. Asp-290 serves as the catalytic Proton donor.

It belongs to the UbiD family. As to quaternary structure, homohexamer. Prenylated FMN is required as a cofactor. Requires Mn(2+) as cofactor.

The protein localises to the cell membrane. It carries out the reaction a 4-hydroxy-3-(all-trans-polyprenyl)benzoate + H(+) = a 2-(all-trans-polyprenyl)phenol + CO2. It participates in cofactor biosynthesis; ubiquinone biosynthesis. Its function is as follows. Catalyzes the decarboxylation of 3-octaprenyl-4-hydroxy benzoate to 2-octaprenylphenol, an intermediate step in ubiquinone biosynthesis. This is 3-octaprenyl-4-hydroxybenzoate carboxy-lyase from Photorhabdus laumondii subsp. laumondii (strain DSM 15139 / CIP 105565 / TT01) (Photorhabdus luminescens subsp. laumondii).